Reading from the N-terminus, the 284-residue chain is MEMO1 family protein Mevan_0697 (284 aa).

The protein belongs to the MEMO1 family.

The protein is MEMO1 family protein Mevan_0697 of Methanococcus vannielii (strain ATCC 35089 / DSM 1224 / JCM 13029 / OCM 148 / SB).